A 1005-amino-acid polypeptide reads, in one-letter code: Beta-galactosidase (1005 aa).

Glu-455 (proton donor) is an active-site residue. Glu-526 acts as the Nucleophile in catalysis.

The protein belongs to the glycosyl hydrolase 2 family.

The enzyme catalyses Hydrolysis of terminal non-reducing beta-D-galactose residues in beta-D-galactosides.. In Actinobacillus pleuropneumoniae (Haemophilus pleuropneumoniae), this protein is Beta-galactosidase (lacZ).